The primary structure comprises 216 residues: Thymidine kinase (216 aa).

Residues 9–16 (GTMDCGKS) and 86–89 (DEAQ) each bind ATP. Residue Glu-87 is the Proton acceptor of the active site.

Belongs to the thymidine kinase family. Homotetramer.

The protein localises to the cytoplasm. It carries out the reaction thymidine + ATP = dTMP + ADP + H(+). This is Thymidine kinase from Streptomyces avermitilis (strain ATCC 31267 / DSM 46492 / JCM 5070 / NBRC 14893 / NCIMB 12804 / NRRL 8165 / MA-4680).